The chain runs to 258 residues: Peptide methionine sulfoxide reductase A4, chloroplastic (258 aa).

Residues 1–53 constitute a chloroplast transit peptide; it reads MQVLVVSPPLIAAASLSKPLNSLSKAALSFSRAKPICPFPQTSRRPISVYKSP. Met54 is modified (N-acetylmethionine). Residues 62–89 are disordered; the sequence is GFGSRPQAQADPSSAAIAQGPDDDVPSS. At Ser245 the chain carries Phosphoserine.

Belongs to the MsrA Met sulfoxide reductase family. Expressed in rosette and cauline leaves, and at lower levels in stems and flowers (at protein level).

The protein resides in the plastid. The protein localises to the chloroplast stroma. The catalysed reaction is L-methionyl-[protein] + [thioredoxin]-disulfide + H2O = L-methionyl-(S)-S-oxide-[protein] + [thioredoxin]-dithiol. It carries out the reaction [thioredoxin]-disulfide + L-methionine + H2O = L-methionine (S)-S-oxide + [thioredoxin]-dithiol. In terms of biological role, catalyzes the reduction of methionine sulfoxide (MetSO) to methionine in proteins. Plays a protective role against oxidative stress by restoring activity to proteins that have been inactivated by methionine oxidation. Prevents the methionine sulfoxidation of the heat shock protein HSP21 and its subsequent inactivation. MSRA family specifically reduces the MetSO S-enantiomer. The protein is Peptide methionine sulfoxide reductase A4, chloroplastic (MSR4) of Arabidopsis thaliana (Mouse-ear cress).